A 335-amino-acid polypeptide reads, in one-letter code: MRN complex-interacting protein (335 aa).

2 disordered regions span residues 75-102 (EEAVNGSEEENAGPLQAEAGSQQAPSKP) and 118-194 (QELD…ALST). Ser-100 bears the Phosphoserine mark. Residues 129–142 (TQLSTSAERPSSPA) are compositionally biased toward polar residues. The short motif at 145-148 (RKRK) is the Nuclear localization signal (NLS) element. Residues 177-194 (STGLFGTEQQGTSPALST) are compositionally biased toward polar residues. Positions 203–230 (FPRWKLPSPVTQVNAPSSKWARFLLAPG) are necessary for the association with the MRN complex. The tract at residues 273-335 (RPPQAIHTTT…TTGEDFDDDL (63 aa)) is disordered. Over residues 286–297 (DRPDRKTREQPR) the composition is skewed to basic and acidic residues.

Belongs to the MRNIP family. Associates with the MRE11-RAD50-NBN (MRN) damage-sensing complex; this association is constitutive. Interacts with MRE11. Interacts with NBN. Interacts with RAD50. Post-translationally, phosphorylated; phosphorylation is constitutive and occurs in the absence of any DNA-damaging stimulus. Phosphorylation is necessary for its nuclear retention.

It localises to the nucleus. The protein localises to the nucleoplasm. Its function is as follows. Plays a role in the cellular response to DNA damage and the maintenance of genome stability through its association with the MRN damage-sensing complex. Promotes chromatin loading and activity of the MRN complex to facilitate subsequent ATM-mediated DNA damage response signaling and DNA repair. The protein is MRN complex-interacting protein of Mus musculus (Mouse).